The chain runs to 139 residues: uncharacterized protein (139 aa).

In terms of domain architecture, HTH marR-type spans Ala-8 to Gln-139. The segment at residues Ile-53–Gln-76 is a DNA-binding region (H-T-H motif).

This is an uncharacterized protein from Bacillus subtilis (strain 168).